A 219-amino-acid polypeptide reads, in one-letter code: Phosphatidylserine decarboxylase proenzyme (219 aa).

Catalysis depends on serine 188, which acts as the Schiff-base intermediate with substrate; via pyruvic acid. A Pyruvic acid (Ser); by autocatalysis modification is found at serine 188.

This sequence belongs to the phosphatidylserine decarboxylase family. PSD-A subfamily. As to quaternary structure, heterodimer of a large membrane-associated beta subunit and a small pyruvoyl-containing alpha subunit. The cofactor is pyruvate. Is synthesized initially as an inactive proenzyme. Formation of the active enzyme involves a self-maturation process in which the active site pyruvoyl group is generated from an internal serine residue via an autocatalytic post-translational modification. Two non-identical subunits are generated from the proenzyme in this reaction, and the pyruvate is formed at the N-terminus of the alpha chain, which is derived from the carboxyl end of the proenzyme. The post-translation cleavage follows an unusual pathway, termed non-hydrolytic serinolysis, in which the side chain hydroxyl group of the serine supplies its oxygen atom to form the C-terminus of the beta chain, while the remainder of the serine residue undergoes an oxidative deamination to produce ammonia and the pyruvoyl prosthetic group on the alpha chain.

The protein resides in the cell membrane. The catalysed reaction is a 1,2-diacyl-sn-glycero-3-phospho-L-serine + H(+) = a 1,2-diacyl-sn-glycero-3-phosphoethanolamine + CO2. The protein operates within phospholipid metabolism; phosphatidylethanolamine biosynthesis; phosphatidylethanolamine from CDP-diacylglycerol: step 2/2. Catalyzes the formation of phosphatidylethanolamine (PtdEtn) from phosphatidylserine (PtdSer). This chain is Phosphatidylserine decarboxylase proenzyme, found in Ruegeria pomeroyi (strain ATCC 700808 / DSM 15171 / DSS-3) (Silicibacter pomeroyi).